The primary structure comprises 514 residues: Peptide chain release factor 3 (514 aa).

The 261-residue stretch at 8–268 folds into the tr-type G domain; that stretch reads KKRRTFAIIS…IFLKFAPEPH (261 aa). Residues 17–24, 85–89, and 139–142 each bind GTP; these read SHPDAGKT, DTPGH, and NKLD.

The protein belongs to the TRAFAC class translation factor GTPase superfamily. Classic translation factor GTPase family. PrfC subfamily.

It localises to the cytoplasm. Functionally, increases the formation of ribosomal termination complexes and stimulates activities of RF-1 and RF-2. It binds guanine nucleotides and has strong preference for UGA stop codons. It may interact directly with the ribosome. The stimulation of RF-1 and RF-2 is significantly reduced by GTP and GDP, but not by GMP. This is Peptide chain release factor 3 from Streptococcus pneumoniae (strain CGSP14).